The sequence spans 400 residues: Putative transposase for insertion sequence element IS5376 (400 aa).

Residues 5 to 67 form the HTH IS21-type domain; sequence GEFFMIKEMY…PFKPYLQKRM (63 aa). A DNA-binding region (H-T-H motif) is located at residues 20 to 39; it reads ISDIARELGIDRKTVRKYIH. The interval 35-55 is disordered; sequence RKYIHSPNPPSKSKRKQRKSK. The Integrase catalytic domain maps to 113–287; sequence YETLPGEQMQ…SPQERWAEES (175 aa).

This sequence belongs to the transposase IS21/IS408/IS1162 family.

Functionally, involved in the transposition of the insertion sequence. The chain is Putative transposase for insertion sequence element IS5376 from Geobacillus stearothermophilus (Bacillus stearothermophilus).